Here is a 221-residue protein sequence, read N- to C-terminus: UPF0502 protein PSPTO_2686 (221 aa).

This sequence belongs to the UPF0502 family.

The polypeptide is UPF0502 protein PSPTO_2686 (Pseudomonas syringae pv. tomato (strain ATCC BAA-871 / DC3000)).